The primary structure comprises 361 residues: D-alanine--D-alanine ligase (361 aa).

The ATP-grasp domain occupies 134-344 (KILAQRAGVP…YTDLITKLID (211 aa)). 169–224 (ASQLGSDLFVKPSNQGSSVGVSHVTNEKEYKVALAEAFKYDDKVLVEETVHGTEVE) is an ATP binding site. 3 residues coordinate Mg(2+): D297, E311, and N313.

It belongs to the D-alanine--D-alanine ligase family. Mg(2+) serves as cofactor. The cofactor is Mn(2+).

The protein resides in the cytoplasm. The enzyme catalyses 2 D-alanine + ATP = D-alanyl-D-alanine + ADP + phosphate + H(+). It functions in the pathway cell wall biogenesis; peptidoglycan biosynthesis. Functionally, cell wall formation. The sequence is that of D-alanine--D-alanine ligase from Lactobacillus johnsonii (strain CNCM I-12250 / La1 / NCC 533).